We begin with the raw amino-acid sequence, 362 residues long: tRNA-specific 2-thiouridylase MnmA (362 aa).

ATP contacts are provided by residues 6 to 13 (AMSGGVDS) and leucine 32. Cysteine 101 serves as the catalytic Nucleophile. Cysteine 101 and cysteine 197 are oxidised to a cystine. Residue glycine 125 coordinates ATP. Residues 147–149 (KDQ) form an interaction with tRNA region. Cysteine 197 acts as the Cysteine persulfide intermediate in catalysis.

The protein belongs to the MnmA/TRMU family.

Its subcellular location is the cytoplasm. The enzyme catalyses S-sulfanyl-L-cysteinyl-[protein] + uridine(34) in tRNA + AH2 + ATP = 2-thiouridine(34) in tRNA + L-cysteinyl-[protein] + A + AMP + diphosphate + H(+). Catalyzes the 2-thiolation of uridine at the wobble position (U34) of tRNA, leading to the formation of s(2)U34. The chain is tRNA-specific 2-thiouridylase MnmA from Acidothermus cellulolyticus (strain ATCC 43068 / DSM 8971 / 11B).